The following is a 324-amino-acid chain: Protease HtpX homolog (324 aa).

2 helical membrane passes run 7-24 (ALLL…GYLI) and 29-46 (GALI…FTYW). His130 is a binding site for Zn(2+). Glu131 is an active-site residue. A Zn(2+)-binding site is contributed by His134. The next 2 helical transmembrane spans lie at 145-165 (ITAT…FFGG) and 172-192 (GPGL…AMLV). Position 201 (Glu201) interacts with Zn(2+). Residues 288-305 (PASTFSRGAGTAASSGTP) show a composition bias toward polar residues. Residues 288 to 324 (PASTFSRGAGTAASSGTPRGTGRSPWGGQPRGRGPWG) are disordered.

Belongs to the peptidase M48B family. The cofactor is Zn(2+).

The protein localises to the cell inner membrane. The sequence is that of Protease HtpX homolog from Rhodopseudomonas palustris (strain TIE-1).